Here is a 352-residue protein sequence, read N- to C-terminus: UDP-N-acetylglucosamine--N-acetylmuramyl-(pentapeptide) pyrophosphoryl-undecaprenol N-acetylglucosamine transferase (352 aa).

UDP-N-acetyl-alpha-D-glucosamine contacts are provided by Ser-195 and Gln-287.

The protein belongs to the glycosyltransferase 28 family. MurG subfamily.

The protein localises to the cell membrane. It carries out the reaction Mur2Ac(oyl-L-Ala-gamma-D-Glu-L-Lys-D-Ala-D-Ala)-di-trans,octa-cis-undecaprenyl diphosphate + UDP-N-acetyl-alpha-D-glucosamine = beta-D-GlcNAc-(1-&gt;4)-Mur2Ac(oyl-L-Ala-gamma-D-Glu-L-Lys-D-Ala-D-Ala)-di-trans,octa-cis-undecaprenyl diphosphate + UDP + H(+). The protein operates within cell wall biogenesis; peptidoglycan biosynthesis. In terms of biological role, cell wall formation. Catalyzes the transfer of a GlcNAc subunit on undecaprenyl-pyrophosphoryl-MurNAc-pentapeptide (lipid intermediate I) to form undecaprenyl-pyrophosphoryl-MurNAc-(pentapeptide)GlcNAc (lipid intermediate II). This Streptococcus pneumoniae (strain Taiwan19F-14) protein is UDP-N-acetylglucosamine--N-acetylmuramyl-(pentapeptide) pyrophosphoryl-undecaprenol N-acetylglucosamine transferase.